The following is a 689-amino-acid chain: DNA ligase (689 aa).

Residues 58–62, 107–108, and Glu138 contribute to the NAD(+) site; these read DQEYD and SL. The active-site N6-AMP-lysine intermediate is Lys140. Residues Arg161, Glu198, Lys314, and Lys338 each contribute to the NAD(+) site. 4 residues coordinate Zn(2+): Cys432, Cys435, Cys448, and Cys453. Positions 611–689 constitute a BRCT domain; sequence ASSGTLSGKT…QELLEMLHGG (79 aa).

It belongs to the NAD-dependent DNA ligase family. LigA subfamily. It depends on Mg(2+) as a cofactor. Mn(2+) is required as a cofactor.

It catalyses the reaction NAD(+) + (deoxyribonucleotide)n-3'-hydroxyl + 5'-phospho-(deoxyribonucleotide)m = (deoxyribonucleotide)n+m + AMP + beta-nicotinamide D-nucleotide.. Its function is as follows. DNA ligase that catalyzes the formation of phosphodiester linkages between 5'-phosphoryl and 3'-hydroxyl groups in double-stranded DNA using NAD as a coenzyme and as the energy source for the reaction. It is essential for DNA replication and repair of damaged DNA. In Methylacidiphilum infernorum (isolate V4) (Methylokorus infernorum (strain V4)), this protein is DNA ligase.